A 121-amino-acid polypeptide reads, in one-letter code: Small ribosomal subunit protein uS13 (121 aa).

The disordered stretch occupies residues 92–121 (RRGLPVRGQNSKNNARTRKGPKRTVANKKK). A compositionally biased stretch (basic residues) spans 106 to 121 (ARTRKGPKRTVANKKK).

The protein belongs to the universal ribosomal protein uS13 family. In terms of assembly, part of the 30S ribosomal subunit. Forms a loose heterodimer with protein S19. Forms two bridges to the 50S subunit in the 70S ribosome.

Functionally, located at the top of the head of the 30S subunit, it contacts several helices of the 16S rRNA. In the 70S ribosome it contacts the 23S rRNA (bridge B1a) and protein L5 of the 50S subunit (bridge B1b), connecting the 2 subunits; these bridges are implicated in subunit movement. Contacts the tRNAs in the A and P-sites. In Shouchella clausii (strain KSM-K16) (Alkalihalobacillus clausii), this protein is Small ribosomal subunit protein uS13.